We begin with the raw amino-acid sequence, 473 residues long: Photosystem II CP43 reaction center protein (473 aa).

Residues 1–14 constitute a propeptide that is removed on maturation; the sequence is MKILYSQRRFYPVE. Position 15 is an N-acetylthreonine (Thr-15). Position 15 is a phosphothreonine (Thr-15). 5 consecutive transmembrane segments (helical) span residues 69 to 93, 134 to 155, 178 to 200, 255 to 275, and 291 to 312; these read LFEV…PHLA, LIGP…KDKN, KALY…RKIT, KPFA…LSYS, and WFNN…ASQA. Glu-367 provides a ligand contact to [CaMn4O5] cluster. The helical transmembrane segment at 447 to 471 threads the bilayer; that stretch reads RARAAAAGFEKGIDRDFEPVLSMTP.

Belongs to the PsbB/PsbC family. PsbC subfamily. PSII is composed of 1 copy each of membrane proteins PsbA, PsbB, PsbC, PsbD, PsbE, PsbF, PsbH, PsbI, PsbJ, PsbK, PsbL, PsbM, PsbT, PsbX, PsbY, PsbZ, Psb30/Ycf12, at least 3 peripheral proteins of the oxygen-evolving complex and a large number of cofactors. It forms dimeric complexes. Binds multiple chlorophylls and provides some of the ligands for the Ca-4Mn-5O cluster of the oxygen-evolving complex. It may also provide a ligand for a Cl- that is required for oxygen evolution. PSII binds additional chlorophylls, carotenoids and specific lipids. serves as cofactor. Post-translationally, phosphorylated on threonine residue(s).

The protein resides in the plastid. Its subcellular location is the chloroplast thylakoid membrane. One of the components of the core complex of photosystem II (PSII). It binds chlorophyll and helps catalyze the primary light-induced photochemical processes of PSII. PSII is a light-driven water:plastoquinone oxidoreductase, using light energy to abstract electrons from H(2)O, generating O(2) and a proton gradient subsequently used for ATP formation. This is Photosystem II CP43 reaction center protein from Marchantia polymorpha (Common liverwort).